Here is a 304-residue protein sequence, read N- to C-terminus: N-acetyllactosaminide alpha-2,3-sialyltransferase (304 aa).

Residues 221 to 225, 242 to 243, and 262 to 263 contribute to the CMP-N-acetyl-beta-neuraminate site; these read FPHPA, FE, and SS. His-223 serves as the catalytic Proton donor.

This sequence belongs to the glycosyltransferase 52 family.

The enzyme catalyses a beta-D-galactosyl-(1-&gt;4)-N-acetyl-beta-D-glucosaminyl derivative + CMP-N-acetyl-beta-neuraminate = an N-acetyl-alpha-neuraminyl-(2-&gt;3)-beta-D-galactosyl-(1-&gt;4)-N-acetyl-beta-D-glucosaminyl derivative + CMP + H(+). The protein operates within bacterial outer membrane biogenesis; lipooligosaccharide biosynthesis. In terms of biological role, catalyzes the transfer of sialic acid from the substrate CMP-N-acetylneuraminate to the terminal galactose residue of the N-acetyllactosamine moiety of surface lipooligosaccharide (LOS). Thus, functions in the sialylation of LOS, which plays a role in the evasion of the host immune response. This is N-acetyllactosaminide alpha-2,3-sialyltransferase from Haemophilus influenzae (strain ATCC 51907 / DSM 11121 / KW20 / Rd).